The following is a 251-amino-acid chain: Short chain dehydrogenase gsfK (251 aa).

Leucine 14, threonine 33, glutamate 60, asparagine 88, and lysine 122 together coordinate NADP(+). Catalysis depends on proton donor residues serine 143 and tyrosine 161. The NADP(+) site is built by tyrosine 161, lysine 165, valine 192, and threonine 194. Catalysis depends on lysine 165, which acts as the Lowers pKa of active site Tyr.

Belongs to the short-chain dehydrogenases/reductases (SDR) family.

It functions in the pathway secondary metabolite biosynthesis; terpenoid biosynthesis. Short chain dehydrogenase; part of the gene cluster that mediates the biosynthesis of griseofulvin, an important antifungal drug that has been in use for a long time for treating dermatophyte infections. The first step of the pathway is the formation of the heptaketide backbone by gsfA which is initiated by priming with acetyl-CoA, followed by sequential condensations of 6 malonyl-CoA units. The resulting benzophenone can undergo a spontaneous dehydration to form norlichexanthone. However, the true precursor for the griseofulvin biosynthesis is not norlichexanthone, but the heptaketide benzophenone that is O-methylated at 3-OH by gsfB to produce griseophenone D which is further methylated at 9-OH by gsfC to yield griseophenone C. Griseophenone C is then substrate of halogenase gsfI which is responsible for the regio-specific chlorination at the C13 position to form griseophenone B. The cytochrome P450 gsfF catalyzes the coupling of orcinol and phloroglucinol rings in griseophenone B to form desmethyl-dehydrogriseofulvin A which is further methylated at 5-OH by gsfD to yield dehydrogriseofulvin. Finally, gsfE performs stereospecific reduction of enone 18 of dehydrogriseofulvin to afford the final product griseofulvin. The exact role of gsfK within the pathway has not been identified yet. The chain is Short chain dehydrogenase gsfK from Penicillium aethiopicum.